A 67-amino-acid polypeptide reads, in one-letter code: Phycobilisome 7.8 kDa linker polypeptide, allophycocyanin-associated, core (67 aa).

The CpcD-like domain occupies 1 to 56 (GRLFKITACVPSQTRIRTQRELQNTYFTKLVPYENWFREQQRIQKMGGKIVKVELA).

It belongs to the phycobilisome linker protein family.

It is found in the cellular thylakoid membrane. Functionally, rod linker protein, associated with allophycocyanin. Linker polypeptides determine the state of aggregation and the location of the disk-shaped phycobiliprotein units within the phycobilisome and modulate their spectroscopic properties in order to mediate a directed and optimal energy transfer. In Mastigocladus laminosus (Fischerella sp.), this protein is Phycobilisome 7.8 kDa linker polypeptide, allophycocyanin-associated, core (apcC).